The following is a 141-amino-acid chain: Histone H2B (141 aa).

The span at 1 to 10 (MAPKAAEKKP) shows a compositional bias: basic and acidic residues. A disordered region spans residues 1-49 (MAPKAAEKKPSTGGKAPAGGKAPAEKKEAGKKTAAAASGDKKKRGKTRK). Lys-8 and Lys-9 each carry N6-acetyllysine; alternate. Residues Lys-8 and Lys-9 each participate in a glycyl lysine isopeptide (Lys-Gly) (interchain with G-Cter in SUMO); alternate cross-link. Residues 11–22 (STGGKAPAGGKA) are compositionally biased toward low complexity. Position 15 is an N6-acetyllysine (Lys-15). Position 26 is an N6-acetyllysine; alternate (Lys-26). Residue Lys-26 forms a Glycyl lysine isopeptide (Lys-Gly) (interchain with G-Cter in SUMO); alternate linkage. Residue Lys-27 forms a Glycyl lysine isopeptide (Lys-Gly) (interchain with G-Cter in SUMO) linkage. Lys-135 participates in a covalent cross-link: Glycyl lysine isopeptide (Lys-Gly) (interchain with G-Cter in ubiquitin).

Belongs to the histone H2B family. In terms of assembly, the nucleosome is a histone octamer containing two molecules each of H2A, H2B, H3 and H4 assembled in one H3-H4 heterotetramer and two H2A-H2B heterodimers. The octamer wraps approximately 147 bp of DNA. Monoubiquitinated by the ubc2-bre1 complex to form H2BK123ub1. H2BK123ub1 gives a specific tag for epigenetic transcriptional activation and is also prerequisite for H3K4me and H3K79me formation. H2BK123ub1 also modulates the formation of double-strand breaks during meiosis and is a prerequisite for DNA-damage checkpoint activation. Post-translationally, acetylated by gcn5 to form H2BK11ac and H2BK16ac. H2BK16ac can also be formed by esa1. Acetylation of N-terminal lysines and particularly formation of H2BK11acK16ac has a positive effect on transcription. In terms of processing, sumoylation to form H2BK6su or H2BK7su, and probably also H2BK16su or H2BK17su, occurs preferentially near the telomeres and represses gene transcription.

The protein localises to the nucleus. The protein resides in the chromosome. In terms of biological role, core component of nucleosome. Nucleosomes wrap and compact DNA into chromatin, limiting DNA accessibility to the cellular machineries which require DNA as a template. Histones thereby play a central role in transcription regulation, DNA repair, DNA replication and chromosomal stability. DNA accessibility is regulated via a complex set of post-translational modifications of histones, also called histone code, and nucleosome remodeling. This Aspergillus oryzae (strain ATCC 42149 / RIB 40) (Yellow koji mold) protein is Histone H2B (htb1).